A 1208-amino-acid polypeptide reads, in one-letter code: DNA-directed RNA polymerase subunit beta (1208 aa).

Residues 1182 to 1208 (EKKAAEQVEDEKDDVIQNFETAEDNLD) are disordered.

It belongs to the RNA polymerase beta chain family. The RNAP catalytic core consists of 2 alpha, 1 beta, 1 beta' and 1 omega subunit. When a sigma factor is associated with the core the holoenzyme is formed, which can initiate transcription.

It carries out the reaction RNA(n) + a ribonucleoside 5'-triphosphate = RNA(n+1) + diphosphate. Its function is as follows. DNA-dependent RNA polymerase catalyzes the transcription of DNA into RNA using the four ribonucleoside triphosphates as substrates. This Enterococcus faecium (Streptococcus faecium) protein is DNA-directed RNA polymerase subunit beta.